The chain runs to 413 residues: Putative competence-damage inducible protein (413 aa).

It belongs to the CinA family.

This chain is Putative competence-damage inducible protein, found in Lacticaseibacillus casei (strain BL23) (Lactobacillus casei).